Here is a 161-residue protein sequence, read N- to C-terminus: MATLQSLADLNRANTQTSNPENEAPVHVQKLDAQGRAYATGKRKDAVARVWIKPGNGTVVVNGRPVETYFARPVLRMILRQPLEIVSRVDQYDITVTVKGGGLSGQAGAVRHGLSKALTYYEPELRSSLKREGFLTRDPRVVERKKYGRKKARRSFQFSKR.

Residues 1–21 (MATLQSLADLNRANTQTSNPE) show a composition bias toward polar residues. The disordered stretch occupies residues 1 to 25 (MATLQSLADLNRANTQTSNPENEAP).

It belongs to the universal ribosomal protein uS9 family.

This is Small ribosomal subunit protein uS9 from Methylorubrum extorquens (strain CM4 / NCIMB 13688) (Methylobacterium extorquens).